Reading from the N-terminus, the 657-residue chain is Histidine ammonia-lyase (657 aa).

A cross-link (5-imidazolinone (Ala-Gly)) is located at residues 253 to 255 (ASG). The residue at position 254 (serine 254) is a 2,3-didehydroalanine (Ser). Threonine 396 carries the post-translational modification Phosphothreonine. Serine 635 bears the Phosphoserine mark. Threonine 637 carries the phosphothreonine modification. Position 648 is a phosphoserine (serine 648).

This sequence belongs to the PAL/histidase family. In terms of processing, contains an active site 4-methylidene-imidazol-5-one (MIO), which is formed autocatalytically by cyclization and dehydration of residues Ala-Ser-Gly.

It carries out the reaction L-histidine = trans-urocanate + NH4(+). It functions in the pathway amino-acid degradation; L-histidine degradation into L-glutamate; N-formimidoyl-L-glutamate from L-histidine: step 1/3. The sequence is that of Histidine ammonia-lyase (HAL) from Homo sapiens (Human).